Consider the following 63-residue polypeptide: Large ribosomal subunit protein bL28 (63 aa).

Residues 11-20 are compositionally biased toward polar residues; sequence GNNSGASVSH. Residues 11–30 form a disordered region; that stretch reads GNNSGASVSHSNKKTKRKWK. Residues 21 to 30 are compositionally biased toward basic residues; sequence SNKKTKRKWK.

The protein belongs to the bacterial ribosomal protein bL28 family.

The sequence is that of Large ribosomal subunit protein bL28 from Natranaerobius thermophilus (strain ATCC BAA-1301 / DSM 18059 / JW/NM-WN-LF).